A 100-amino-acid polypeptide reads, in one-letter code: Urease subunit gamma (100 aa).

Belongs to the urease gamma subunit family. As to quaternary structure, heterotrimer of UreA (gamma), UreB (beta) and UreC (alpha) subunits. Three heterotrimers associate to form the active enzyme.

It localises to the cytoplasm. It catalyses the reaction urea + 2 H2O + H(+) = hydrogencarbonate + 2 NH4(+). It participates in nitrogen metabolism; urea degradation; CO(2) and NH(3) from urea (urease route): step 1/1. This Cupriavidus metallidurans (strain ATCC 43123 / DSM 2839 / NBRC 102507 / CH34) (Ralstonia metallidurans) protein is Urease subunit gamma.